Consider the following 406-residue polypeptide: Peptide chain release factor PrfB3, chloroplastic (406 aa).

Belongs to the prokaryotic/mitochondrial release factor family. As to quaternary structure, interacts with PDE338.

Its subcellular location is the plastid. It localises to the chloroplast stroma. The protein localises to the chloroplast. Involved in the light- and stress-dependent regulation of stability of 3' processed petB transcripts, thus regulating cytochrome b6 accumulation, a rate-limiting step in photosynthetic electron transport. May be recruited to specifically protect petB transcripts against 3'-5' exonucleolytic attack by masking the 3' ends. Does not function as release factor. The chain is Peptide chain release factor PrfB3, chloroplastic from Arabidopsis thaliana (Mouse-ear cress).